Reading from the N-terminus, the 443-residue chain is ATP-dependent protease ATPase subunit HslU (443 aa).

ATP-binding positions include Ile20, 62–67 (GVGKTE), Asp255, Glu321, and Arg393.

This sequence belongs to the ClpX chaperone family. HslU subfamily. A double ring-shaped homohexamer of HslV is capped on each side by a ring-shaped HslU homohexamer. The assembly of the HslU/HslV complex is dependent on binding of ATP.

It is found in the cytoplasm. In terms of biological role, ATPase subunit of a proteasome-like degradation complex; this subunit has chaperone activity. The binding of ATP and its subsequent hydrolysis by HslU are essential for unfolding of protein substrates subsequently hydrolyzed by HslV. HslU recognizes the N-terminal part of its protein substrates and unfolds these before they are guided to HslV for hydrolysis. This chain is ATP-dependent protease ATPase subunit HslU, found in Helicobacter pylori (strain J99 / ATCC 700824) (Campylobacter pylori J99).